The sequence spans 64 residues: MPKVEVKNGDLDAALKSFKRITSETEKAYKKHEFYLRPGLRKKEKEKAAAKKRNKYNKRRSFYY.

The segment at Lys-42–Tyr-64 is disordered. Basic residues predominate over residues Ala-50 to Tyr-64.

It belongs to the bacterial ribosomal protein bS21 family.

The chain is Small ribosomal subunit protein bS21 from Malacoplasma penetrans (strain HF-2) (Mycoplasma penetrans).